The primary structure comprises 158 residues: Protein NrdI (158 aa).

This sequence belongs to the NrdI family.

Functionally, probably involved in ribonucleotide reductase function. This chain is Protein NrdI, found in Rhodococcus jostii (strain RHA1).